We begin with the raw amino-acid sequence, 294 residues long: Pyridoxal 5'-phosphate synthase subunit PdxS (294 aa).

A D-ribose 5-phosphate-binding site is contributed by Asp24. Lys81 serves as the catalytic Schiff-base intermediate with D-ribose 5-phosphate. Residue Gly153 coordinates D-ribose 5-phosphate. D-glyceraldehyde 3-phosphate is bound at residue Arg165. D-ribose 5-phosphate contacts are provided by residues Gly214 and 235–236; that span reads GS.

This sequence belongs to the PdxS/SNZ family. As to quaternary structure, homohexamer and homododecamer. In the presence of PdxT, forms a dodecamer of heterodimers.

It carries out the reaction aldehydo-D-ribose 5-phosphate + D-glyceraldehyde 3-phosphate + L-glutamine = pyridoxal 5'-phosphate + L-glutamate + phosphate + 3 H2O + H(+). It functions in the pathway cofactor biosynthesis; pyridoxal 5'-phosphate biosynthesis. In terms of biological role, catalyzes the formation of pyridoxal 5'-phosphate from ribose 5-phosphate (RBP), glyceraldehyde 3-phosphate (G3P) and ammonia. The ammonia is provided by the PdxT subunit. Can also use ribulose 5-phosphate and dihydroxyacetone phosphate as substrates, resulting from enzyme-catalyzed isomerization of RBP and G3P, respectively. In Bacillus subtilis (strain 168), this protein is Pyridoxal 5'-phosphate synthase subunit PdxS.